The following is a 200-amino-acid chain: Dephospho-CoA kinase (200 aa).

The 197-residue stretch at 4 to 200 (VIGLTGGIGS…QKYIKMSHLY (197 aa)) folds into the DPCK domain. 12 to 17 (GSGKTT) lines the ATP pocket.

The protein belongs to the CoaE family.

It is found in the cytoplasm. The catalysed reaction is 3'-dephospho-CoA + ATP = ADP + CoA + H(+). The protein operates within cofactor biosynthesis; coenzyme A biosynthesis; CoA from (R)-pantothenate: step 5/5. Its function is as follows. Catalyzes the phosphorylation of the 3'-hydroxyl group of dephosphocoenzyme A to form coenzyme A. This Photobacterium profundum (strain SS9) protein is Dephospho-CoA kinase.